Consider the following 306-residue polypeptide: MSSHPPAPRKHVTIHELRRMKESGERIAMVTAYDATAARLVAVAGVDAVLVGDSLGMAVQGHESTLPVTLDQMVYHSAMVRRGLARGDGRAHLVTDMSFGSYQASADEAVKAAMRLVAEGGAEAVKLEGGAEFGEVIRRIVRAGVPVMGHIGLTPQSVHKMGGYVVQGKDSEKAQQILRDARALEAAGCYALVLECIPSELARIVTSQLRVPTIGIGAGPHCDGQVLVLNDLLGLDASFTPRFVKRFGEVGAAVQDAVGAYVGEVKARAFPDDAHSFHSSSVRLVPVERHAEAAEEEPPDAIGAPI.

Mg(2+)-binding residues include aspartate 53 and aspartate 96. 3-methyl-2-oxobutanoate-binding positions include 53–54 (DS), aspartate 96, and lysine 126. Residue glutamate 128 coordinates Mg(2+). The Proton acceptor role is filled by glutamate 195.

Belongs to the PanB family. Homodecamer; pentamer of dimers. The cofactor is Mg(2+).

The protein localises to the cytoplasm. It catalyses the reaction 3-methyl-2-oxobutanoate + (6R)-5,10-methylene-5,6,7,8-tetrahydrofolate + H2O = 2-dehydropantoate + (6S)-5,6,7,8-tetrahydrofolate. It participates in cofactor biosynthesis; (R)-pantothenate biosynthesis; (R)-pantoate from 3-methyl-2-oxobutanoate: step 1/2. Catalyzes the reversible reaction in which hydroxymethyl group from 5,10-methylenetetrahydrofolate is transferred onto alpha-ketoisovalerate to form ketopantoate. This chain is 3-methyl-2-oxobutanoate hydroxymethyltransferase, found in Anaeromyxobacter sp. (strain K).